Consider the following 136-residue polypeptide: Histone H3 (136 aa).

Positions 1 to 43 (MARTKQTARKNVGGKAPRKHIGQKSARKTASTTAGMKKPHRYR) are disordered. Lys10 is subject to N6-methylated lysine. Lys15 and Lys24 each carry N6-acetyllysine. A compositionally biased stretch (basic residues) spans 16 to 27 (APRKHIGQKSAR). Lys28 and Lys37 each carry N6-methylated lysine.

Belongs to the histone H3 family. As to quaternary structure, the nucleosome is a histone octamer containing two molecules each of H2A, H2B, H3 and H4 assembled in one H3-H4 heterotetramer and two H2A-H2B heterodimers. The octamer wraps approximately 147 bp of DNA.

The protein localises to the nucleus. The protein resides in the chromosome. Core component of nucleosome. Nucleosomes wrap and compact DNA into chromatin, limiting DNA accessibility to the cellular machineries which require DNA as a template. Histones thereby play a central role in transcription regulation, DNA repair, DNA replication and chromosomal stability. DNA accessibility is regulated via a complex set of post-translational modifications of histones, also called histone code, and nucleosome remodeling. In Euplotes crassus, this protein is Histone H3.